The primary structure comprises 967 residues: Nonsense-mediated mRNA decay factor SMG8 (967 aa).

The disordered stretch occupies residues 627 to 702; that stretch reads LNEGEDADAD…SCPESQSVAS (76 aa). The segment covering 628–639 has biased composition (acidic residues); sequence NEGEDADADADS. Low complexity predominate over residues 643–666; sequence RSQICSSGQSSRSRSNSSSSDTSS. The span at 686 to 702 shows a compositional bias: polar residues; sequence ATEALSESCPESQSVAS.

Belongs to the SMG8 family.

In terms of biological role, involved in nonsense-mediated decay (NMD) of mRNAs containing premature stop codons. Probable component of kinase complex containing nonC and recruited to stalled ribosomes. In Drosophila mojavensis (Fruit fly), this protein is Nonsense-mediated mRNA decay factor SMG8.